The following is a 254-amino-acid chain: GTP cyclohydrolase 1 type 2 homolog (254 aa).

5 residues coordinate a divalent metal cation: His-68, His-69, Asp-106, His-222, and Glu-226.

This sequence belongs to the GTP cyclohydrolase I type 2/NIF3 family. Homohexamer.

This is GTP cyclohydrolase 1 type 2 homolog from Allochromatium vinosum (strain ATCC 17899 / DSM 180 / NBRC 103801 / NCIMB 10441 / D) (Chromatium vinosum).